Reading from the N-terminus, the 578-residue chain is Arginine--tRNA ligase (578 aa).

Positions 127-137 match the 'HIGH' region motif; the sequence is PNLAKEMHVGH.

The protein belongs to the class-I aminoacyl-tRNA synthetase family. As to quaternary structure, monomer.

It is found in the cytoplasm. The catalysed reaction is tRNA(Arg) + L-arginine + ATP = L-arginyl-tRNA(Arg) + AMP + diphosphate. In Pseudomonas fluorescens (strain SBW25), this protein is Arginine--tRNA ligase.